Consider the following 195-residue polypeptide: Molybdenum cofactor guanylyltransferase (195 aa).

GTP-binding positions include 12 to 14 (LAG), Lys-25, Asn-53, Asp-70, and Asp-100. Asp-100 is a binding site for Mg(2+).

The protein belongs to the MobA family. In terms of assembly, monomer. Mg(2+) is required as a cofactor.

It is found in the cytoplasm. The enzyme catalyses Mo-molybdopterin + GTP + H(+) = Mo-molybdopterin guanine dinucleotide + diphosphate. Functionally, transfers a GMP moiety from GTP to Mo-molybdopterin (Mo-MPT) cofactor (Moco or molybdenum cofactor) to form Mo-molybdopterin guanine dinucleotide (Mo-MGD) cofactor. The sequence is that of Molybdenum cofactor guanylyltransferase from Vibrio vulnificus (strain YJ016).